The sequence spans 201 residues: Retinol-binding protein 4 (201 aa).

The signal sequence occupies residues 1–18; sequence MEWVWALVLLAALGSGRG. Intrachain disulfides connect cysteine 22–cysteine 178, cysteine 88–cysteine 192, and cysteine 138–cysteine 147. Glutamine 116 serves as a coordination point for substrate. An Omega-N-methylarginine modification is found at arginine 139.

It belongs to the calycin superfamily. Lipocalin family. As to quaternary structure, interacts with TTR. Interaction with TTR prevents its loss by filtration through the kidney glomeruli. Interacts with STRA6.

It localises to the secreted. Its function is as follows. Retinol-binding protein that mediates retinol transport in blood plasma. Delivers retinol from the liver stores to the peripheral tissues. Transfers the bound all-trans retinol to STRA6, that then facilitates retinol transport across the cell membrane. This Oryctolagus cuniculus (Rabbit) protein is Retinol-binding protein 4 (RBP4).